A 165-amino-acid polypeptide reads, in one-letter code: Phosphopantetheine adenylyltransferase (165 aa).

Substrate is bound at residue threonine 9. ATP-binding positions include 9-10 (TF) and histidine 17. Substrate-binding residues include lysine 41, leucine 73, and arginine 87. ATP is bound by residues 88–90 (GLR), glutamate 98, and 123–129 (YMFISAT).

This sequence belongs to the bacterial CoaD family. Homohexamer. Requires Mg(2+) as cofactor.

Its subcellular location is the cytoplasm. It catalyses the reaction (R)-4'-phosphopantetheine + ATP + H(+) = 3'-dephospho-CoA + diphosphate. The protein operates within cofactor biosynthesis; coenzyme A biosynthesis; CoA from (R)-pantothenate: step 4/5. Reversibly transfers an adenylyl group from ATP to 4'-phosphopantetheine, yielding dephospho-CoA (dPCoA) and pyrophosphate. This Nitrosospira multiformis (strain ATCC 25196 / NCIMB 11849 / C 71) protein is Phosphopantetheine adenylyltransferase.